The primary structure comprises 447 residues: Cysteine--tRNA ligase (447 aa).

Cys28 contributes to the Zn(2+) binding site. Residues 30-40 (PTVYNYIHIGN) carry the 'HIGH' region motif. Zn(2+) is bound by residues Cys211, His236, and Glu240. The 'KMSKS' region signature appears at 268-272 (KMSKS). Position 271 (Lys271) interacts with ATP.

The protein belongs to the class-I aminoacyl-tRNA synthetase family. In terms of assembly, monomer. It depends on Zn(2+) as a cofactor.

The protein resides in the cytoplasm. It carries out the reaction tRNA(Cys) + L-cysteine + ATP = L-cysteinyl-tRNA(Cys) + AMP + diphosphate. This is Cysteine--tRNA ligase from Streptococcus pyogenes serotype M18 (strain MGAS8232).